The following is a 409-amino-acid chain: Tyrosine--tRNA ligase (409 aa).

The 'HIGH' region signature appears at 54–63; it reads PTAPDIHLGH. Positions 238–242 match the 'KMSKS' region motif; sequence KMSKS. K241 contributes to the ATP binding site. The S4 RNA-binding domain occupies 347–407; sequence MGILHVLRAS…GKRKFARVNL (61 aa).

The protein belongs to the class-I aminoacyl-tRNA synthetase family. TyrS type 2 subfamily. In terms of assembly, homodimer.

It is found in the cytoplasm. It carries out the reaction tRNA(Tyr) + L-tyrosine + ATP = L-tyrosyl-tRNA(Tyr) + AMP + diphosphate + H(+). Functionally, catalyzes the attachment of tyrosine to tRNA(Tyr) in a two-step reaction: tyrosine is first activated by ATP to form Tyr-AMP and then transferred to the acceptor end of tRNA(Tyr). The protein is Tyrosine--tRNA ligase of Bordetella avium (strain 197N).